The chain runs to 83 residues: Cell division topological specificity factor (83 aa).

It belongs to the MinE family.

In terms of biological role, prevents the cell division inhibition by proteins MinC and MinD at internal division sites while permitting inhibition at polar sites. This ensures cell division at the proper site by restricting the formation of a division septum at the midpoint of the long axis of the cell. This is Cell division topological specificity factor from Bordetella parapertussis (strain 12822 / ATCC BAA-587 / NCTC 13253).